Reading from the N-terminus, the 31-residue chain is Cytochrome b6-f complex subunit 6 (31 aa).

Residues Ile4 to Ser26 form a helical membrane-spanning segment.

The protein belongs to the PetL family. As to quaternary structure, the 4 large subunits of the cytochrome b6-f complex are cytochrome b6, subunit IV (17 kDa polypeptide, PetD), cytochrome f and the Rieske protein, while the 4 small subunits are PetG, PetL, PetM and PetN. The complex functions as a dimer.

Its subcellular location is the plastid. The protein resides in the chloroplast thylakoid membrane. Component of the cytochrome b6-f complex, which mediates electron transfer between photosystem II (PSII) and photosystem I (PSI), cyclic electron flow around PSI, and state transitions. PetL is important for photoautotrophic growth as well as for electron transfer efficiency and stability of the cytochrome b6-f complex. The sequence is that of Cytochrome b6-f complex subunit 6 from Acorus calamus (Sweet flag).